Reading from the N-terminus, the 158-residue chain is MIVFPFLLFQMLSTEVEGGLFDFNATLPLMALQFIILTTILNFIFYKPVTNVLDERDEYIRNSLTTASASLVKADELTKTYEQQLAESRKKAQDIIKVAQEQAQQIVSVKIKDAQAYGEKLVSEAFHQLSIQKEDALKTLEMQVDTLSDLIKSKLLND.

The chain crosses the membrane as a helical span at residues 25-45 (ATLPLMALQFIILTTILNFIF).

It belongs to the ATPase B chain family. F-type ATPases have 2 components, F(1) - the catalytic core - and F(0) - the membrane proton channel. F(1) has five subunits: alpha(3), beta(3), gamma(1), delta(1), epsilon(1). F(0) has four main subunits: a(1), b(1), b'(1) and c(10-14). The alpha and beta chains form an alternating ring which encloses part of the gamma chain. F(1) is attached to F(0) by a central stalk formed by the gamma and epsilon chains, while a peripheral stalk is formed by the delta, b and b' chains.

The protein localises to the plastid. It is found in the chloroplast thylakoid membrane. F(1)F(0) ATP synthase produces ATP from ADP in the presence of a proton or sodium gradient. F-type ATPases consist of two structural domains, F(1) containing the extramembraneous catalytic core and F(0) containing the membrane proton channel, linked together by a central stalk and a peripheral stalk. During catalysis, ATP synthesis in the catalytic domain of F(1) is coupled via a rotary mechanism of the central stalk subunits to proton translocation. In terms of biological role, component of the F(0) channel, it forms part of the peripheral stalk, linking F(1) to F(0). The b'-subunit is a diverged and duplicated form of b found in plants and photosynthetic bacteria. This is ATP synthase subunit b', chloroplastic from Gracilaria tenuistipitata var. liui (Red alga).